The following is a 262-amino-acid chain: Nickel import ATP-binding protein NikD (262 aa).

Positions 6–249 (LAIEGLTATT…PGHEVTRMLV (244 aa)) constitute an ABC transporter domain. Residue 42-49 (GASGSGKS) participates in ATP binding.

This sequence belongs to the ABC transporter superfamily. Nickel importer (TC 3.A.1.5.3) family. The complex is composed of two ATP-binding proteins (NikD and NikE), two transmembrane proteins (NikB and NikC) and a solute-binding protein (NikA).

Its subcellular location is the cell inner membrane. It carries out the reaction Ni(2+)(out) + ATP + H2O = Ni(2+)(in) + ADP + phosphate + H(+). Its function is as follows. Part of the ABC transporter complex NikABCDE involved in nickel import. Responsible for energy coupling to the transport system. The polypeptide is Nickel import ATP-binding protein NikD (Brucella suis biovar 1 (strain 1330)).